Consider the following 182-residue polypeptide: Adenine phosphoribosyltransferase (182 aa).

It belongs to the purine/pyrimidine phosphoribosyltransferase family. As to quaternary structure, homodimer.

The protein localises to the cytoplasm. It catalyses the reaction AMP + diphosphate = 5-phospho-alpha-D-ribose 1-diphosphate + adenine. It participates in purine metabolism; AMP biosynthesis via salvage pathway; AMP from adenine: step 1/1. Functionally, catalyzes a salvage reaction resulting in the formation of AMP, that is energically less costly than de novo synthesis. The chain is Adenine phosphoribosyltransferase from Campylobacter curvus (strain 525.92).